The primary structure comprises 190 residues: Holliday junction branch migration complex subunit RuvA (190 aa).

Residues 1–64 (MIGKLTGTLL…EDAQLLYGFG (64 aa)) are domain I. Positions 65–137 (TAQERQAFRE…LKGKLGADVG (73 aa)) are domain II. The flexible linker stretch occupies residues 137–141 (GVRAH). Positions 142–190 (AANDNQADILQALLALGYNDKEAAAALKALPADVGVSEGIKLALKSLSK) are domain III.

This sequence belongs to the RuvA family. As to quaternary structure, homotetramer. Forms an RuvA(8)-RuvB(12)-Holliday junction (HJ) complex. HJ DNA is sandwiched between 2 RuvA tetramers; dsDNA enters through RuvA and exits via RuvB. An RuvB hexamer assembles on each DNA strand where it exits the tetramer. Each RuvB hexamer is contacted by two RuvA subunits (via domain III) on 2 adjacent RuvB subunits; this complex drives branch migration. In the full resolvosome a probable DNA-RuvA(4)-RuvB(12)-RuvC(2) complex forms which resolves the HJ.

It is found in the cytoplasm. Its function is as follows. The RuvA-RuvB-RuvC complex processes Holliday junction (HJ) DNA during genetic recombination and DNA repair, while the RuvA-RuvB complex plays an important role in the rescue of blocked DNA replication forks via replication fork reversal (RFR). RuvA specifically binds to HJ cruciform DNA, conferring on it an open structure. The RuvB hexamer acts as an ATP-dependent pump, pulling dsDNA into and through the RuvAB complex. HJ branch migration allows RuvC to scan DNA until it finds its consensus sequence, where it cleaves and resolves the cruciform DNA. The polypeptide is Holliday junction branch migration complex subunit RuvA (Acidovorax ebreus (strain TPSY) (Diaphorobacter sp. (strain TPSY))).